A 284-amino-acid polypeptide reads, in one-letter code: UTP--glucose-1-phosphate uridylyltransferase (284 aa).

Belongs to the UDPGP type 2 family.

It carries out the reaction alpha-D-glucose 1-phosphate + UTP + H(+) = UDP-alpha-D-glucose + diphosphate. The polypeptide is UTP--glucose-1-phosphate uridylyltransferase (celA) (Komagataeibacter xylinus (Gluconacetobacter xylinus)).